The chain runs to 203 residues: LexA repressor (203 aa).

Residues 28 to 47 (IREIGDEFGITAKGAYDHLK) constitute a DNA-binding region (H-T-H motif). Residues serine 127 and lysine 164 each act as for autocatalytic cleavage activity in the active site.

This sequence belongs to the peptidase S24 family. As to quaternary structure, homodimer.

The catalysed reaction is Hydrolysis of Ala-|-Gly bond in repressor LexA.. Functionally, represses a number of genes involved in the response to DNA damage (SOS response), including recA and lexA. In the presence of single-stranded DNA, RecA interacts with LexA causing an autocatalytic cleavage which disrupts the DNA-binding part of LexA, leading to derepression of the SOS regulon and eventually DNA repair. This Leptospira borgpetersenii serovar Hardjo-bovis (strain JB197) protein is LexA repressor.